We begin with the raw amino-acid sequence, 393 residues long: Phosphopentomutase (393 aa).

6 residues coordinate Mn(2+): D14, D287, H292, D328, H329, and H340.

The protein belongs to the phosphopentomutase family. The cofactor is Mn(2+).

The protein localises to the cytoplasm. The catalysed reaction is 2-deoxy-alpha-D-ribose 1-phosphate = 2-deoxy-D-ribose 5-phosphate. It carries out the reaction alpha-D-ribose 1-phosphate = D-ribose 5-phosphate. It participates in carbohydrate degradation; 2-deoxy-D-ribose 1-phosphate degradation; D-glyceraldehyde 3-phosphate and acetaldehyde from 2-deoxy-alpha-D-ribose 1-phosphate: step 1/2. Its function is as follows. Isomerase that catalyzes the conversion of deoxy-ribose 1-phosphate (dRib-1-P) and ribose 1-phosphate (Rib-1-P) to deoxy-ribose 5-phosphate (dRib-5-P) and ribose 5-phosphate (Rib-5-P), respectively. The protein is Phosphopentomutase of Geobacillus stearothermophilus (Bacillus stearothermophilus).